The sequence spans 189 residues: Probable DNA-directed RNA polymerase subunit delta (189 aa).

In terms of domain architecture, HTH HARE-type spans 14 to 81 (LSMIEVAHAI…GENVWALRTW (68 aa)). Composition is skewed to acidic residues over residues 90–100 (EVDHPEDDGDE) and 118–189 (EGDD…EDEE). The disordered stretch occupies residues 90 to 189 (EVDHPEDDGD…DDLDDDEDEE (100 aa)).

Belongs to the RpoE family. As to quaternary structure, RNAP is composed of a core of 2 alpha, a beta and a beta' subunits. The core is associated with a delta subunit and one of several sigma factors.

Participates in both the initiation and recycling phases of transcription. In the presence of the delta subunit, RNAP displays an increased specificity of transcription, a decreased affinity for nucleic acids, and an increased efficiency of RNA synthesis because of enhanced recycling. The protein is Probable DNA-directed RNA polymerase subunit delta of Lactobacillus delbrueckii subsp. bulgaricus (strain ATCC 11842 / DSM 20081 / BCRC 10696 / JCM 1002 / NBRC 13953 / NCIMB 11778 / NCTC 12712 / WDCM 00102 / Lb 14).